The following is a 471-amino-acid chain: Intraflagellar transport protein 46 homolog (471 aa).

2 disordered regions span residues 1–202 (MSSE…SNMR) and 226–246 (SRLEDDSSNDDDDDDDDEDDD). Composition is skewed to acidic residues over residues 89 to 99 (SEPQEVIDVND) and 231 to 246 (DSSNDDDDDDDDEDDD).

The protein belongs to the IFT46 family. In terms of assembly, component of the IFT complex B composed of at least che-2, che-13, dyf-1, dyf-3, dyf-6, dyf-11, dyf-13, ift-20, ift-74, ift-81, ifta-2, osm-1, osm-5 and osm-6. In terms of tissue distribution, expressed in the hypodermis and sensory neurons including inner labial, PDE, amphid and phasmid neurons.

It is found in the cell projection. The protein resides in the cilium. Its subcellular location is the cytoplasm. It localises to the cytoskeleton. The protein localises to the cilium basal body. It is found in the dendrite. The protein resides in the perikaryon. Component of the intraflagellar transport (IFT) complex B required for transport of proteins in the motile cilium. May be required for ciliary entrance and transport of specific ciliary cargo proteins such as che-3 which are related to motility. Required for normal morphology and function of ciliated amphid sensory neurons. This chain is Intraflagellar transport protein 46 homolog, found in Caenorhabditis elegans.